A 195-amino-acid chain; its full sequence is Large ribosomal subunit protein uL18 (195 aa).

Belongs to the universal ribosomal protein uL18 family. In terms of assembly, part of the 50S ribosomal subunit. Contacts the 5S and 23S rRNAs.

Its function is as follows. This is one of the proteins that bind and probably mediate the attachment of the 5S RNA into the large ribosomal subunit, where it forms part of the central protuberance. This is Large ribosomal subunit protein uL18 from Nanoarchaeum equitans (strain Kin4-M).